Reading from the N-terminus, the 238-residue chain is Ion-translocating oxidoreductase complex subunit E (238 aa).

The next 6 membrane-spanning stretches (helical) occupy residues 20–40 (ALVQ…VVNA), 41–61 (LGLG…VSLI), 72–92 (PAFV…MKAF), 95–115 (ELYQ…AVLG), 130–150 (AVDG…VGAV), and 185–205 (NVIF…LIAA).

The protein belongs to the NqrDE/RnfAE family. In terms of assembly, the complex is composed of six subunits: RnfA, RnfB, RnfC, RnfD, RnfE and RnfG.

It localises to the cell inner membrane. Its function is as follows. Part of a membrane-bound complex that couples electron transfer with translocation of ions across the membrane. This is Ion-translocating oxidoreductase complex subunit E from Cellvibrio japonicus (strain Ueda107) (Pseudomonas fluorescens subsp. cellulosa).